Here is a 129-residue protein sequence, read N- to C-terminus: Cytochrome c oxidase subunit 5B, mitochondrial (129 aa).

Residues 1-31 (MASRLLRGVGALASQALRARGPNGVSVVRSM) constitute a mitochondrion transit peptide. Lys-68 and Lys-86 each carry N6-acetyllysine. Cys-91, Cys-93, Cys-113, and Cys-116 together coordinate Zn(2+). Lys-121 is subject to N6-acetyllysine.

It belongs to the cytochrome c oxidase subunit 5B family. As to quaternary structure, component of the cytochrome c oxidase (complex IV, CIV), a multisubunit enzyme composed of 14 subunits. The complex is composed of a catalytic core of 3 subunits MT-CO1, MT-CO2 and MT-CO3, encoded in the mitochondrial DNA, and 11 supernumerary subunits COX4I1 (or COX4I2), COX5A, COX5B, COX6A2 (or COX6A1), COX6B1 (or COX6B2), COX6C, COX7A1 (or COX7A2), COX7B, COX7C, COX8B and NDUFA4, which are encoded in the nuclear genome. The complex exists as a monomer or a dimer and forms supercomplexes (SCs) in the inner mitochondrial membrane with NADH-ubiquinone oxidoreductase (complex I, CI) and ubiquinol-cytochrome c oxidoreductase (cytochrome b-c1 complex, complex III, CIII), resulting in different assemblies (supercomplex SCI(1)III(2)IV(1) and megacomplex MCI(2)III(2)IV(2)).

It is found in the mitochondrion inner membrane. The protein operates within energy metabolism; oxidative phosphorylation. In terms of biological role, component of the cytochrome c oxidase, the last enzyme in the mitochondrial electron transport chain which drives oxidative phosphorylation. The respiratory chain contains 3 multisubunit complexes succinate dehydrogenase (complex II, CII), ubiquinol-cytochrome c oxidoreductase (cytochrome b-c1 complex, complex III, CIII) and cytochrome c oxidase (complex IV, CIV), that cooperate to transfer electrons derived from NADH and succinate to molecular oxygen, creating an electrochemical gradient over the inner membrane that drives transmembrane transport and the ATP synthase. Cytochrome c oxidase is the component of the respiratory chain that catalyzes the reduction of oxygen to water. Electrons originating from reduced cytochrome c in the intermembrane space (IMS) are transferred via the dinuclear copper A center (CU(A)) of subunit 2 and heme A of subunit 1 to the active site in subunit 1, a binuclear center (BNC) formed by heme A3 and copper B (CU(B)). The BNC reduces molecular oxygen to 2 water molecules using 4 electrons from cytochrome c in the IMS and 4 protons from the mitochondrial matrix. This is Cytochrome c oxidase subunit 5B, mitochondrial (COX5B) from Bos taurus (Bovine).